The primary structure comprises 237 residues: MADS-box protein GGM13 (237 aa).

Residues 1–61 (MGRGKIEIKR…GKLFEYSSAS (61 aa)) form the MADS-box domain. The region spanning 84–174 (NQHLYCEMTR…CRLLAEQQAA (91 aa)) is the K-box domain.

Expression specific for female reproductive structures: strong at the adaxial base of the cupules, where ovules will later develop, then in the outermost cell layer of the nucellus, in the inner envelope, and in the inner half of the middle envelope at late stage of ovule development.

It is found in the nucleus. In terms of biological role, probable transcription factor. The protein is MADS-box protein GGM13 (GGM13) of Gnetum gnemon (Spanish joint-fir).